The chain runs to 478 residues: MIRRLHDTNDLVRAFPRVHFVGIGGTGMSGIAEVMLTLGYEVSGSDNADNVATRRLASLGARIMRGHSAANVLGTDCVVVSSAIREDNPELMEARSQRIPIMPRAAMLAELMRFRRGIAVAGTHGKTTTTSLTAAVLSEGGLDPTFVIGGQLLAAGANAKLGGGQWLVAEADESDGSFLRLNPLMSIITNIDADHLENYGNDFARVQAAFAEFLQRLPFYGLAVLCIDDPEVAALAAKTPRHVMSYGMSPQADVRAENVVQEGSRMRFTLRLPQGTSQEVVLALPGKHNVLNALAAAAVGWQLGVAPDAIARALEGFAGVGRRFNDLGEVTTASGAKVRIIDDYGHHPSELEAVFAAARGGWADKRLVVAFQPHRYSRTRDQFDKFAAVLSSVDALVLSEVYPAGEEPIAGADSHALARAIRARGRSEPVVVGKAAELASVLPDVLQDGDLLLMMGAGDIGAVATHIAVEGFKGEGEA.

Residue 122–128 coordinates ATP; that stretch reads GTHGKTT.

The protein belongs to the MurCDEF family.

The protein resides in the cytoplasm. The catalysed reaction is UDP-N-acetyl-alpha-D-muramate + L-alanine + ATP = UDP-N-acetyl-alpha-D-muramoyl-L-alanine + ADP + phosphate + H(+). It participates in cell wall biogenesis; peptidoglycan biosynthesis. Functionally, cell wall formation. The chain is UDP-N-acetylmuramate--L-alanine ligase from Stenotrophomonas maltophilia (strain R551-3).